The sequence spans 259 residues: Phosphoribosylaminoimidazole-succinocarboxamide synthase (259 aa).

It belongs to the SAICAR synthetase family.

The enzyme catalyses 5-amino-1-(5-phospho-D-ribosyl)imidazole-4-carboxylate + L-aspartate + ATP = (2S)-2-[5-amino-1-(5-phospho-beta-D-ribosyl)imidazole-4-carboxamido]succinate + ADP + phosphate + 2 H(+). The protein operates within purine metabolism; IMP biosynthesis via de novo pathway; 5-amino-1-(5-phospho-D-ribosyl)imidazole-4-carboxamide from 5-amino-1-(5-phospho-D-ribosyl)imidazole-4-carboxylate: step 1/2. In Zymomonas mobilis subsp. mobilis (strain ATCC 31821 / ZM4 / CP4), this protein is Phosphoribosylaminoimidazole-succinocarboxamide synthase.